The primary structure comprises 421 residues: Medium-chain specific acyl-CoA dehydrogenase, mitochondrial (421 aa).

The N-terminal 25 residues, 1 to 25, are a transit peptide targeting the mitochondrion; that stretch reads MAAGFGRCCRVLRSISRFQWRSQHT. Position 69 is an N6-acetyllysine; alternate (lysine 69). Position 69 is an N6-succinyllysine; alternate (lysine 69). 158-167 is an FAD binding site; the sequence is YCVTEPGAGS. Serine 167 is an octanoyl-CoA binding site. An N6-succinyllysine modification is found at lysine 179. 191-193 is an FAD binding site; the sequence is WIT. Lysine 212, lysine 217, and lysine 271 each carry N6-acetyllysine; alternate. N6-succinyllysine; alternate occurs at positions 212, 217, and 271. Aspartate 278 lines the octanoyl-CoA pocket. Lysine 279 is subject to N6-acetyllysine. An octanoyl-CoA-binding site is contributed by arginine 281. At lysine 301 the chain carries N6-acetyllysine. FAD contacts are provided by residues 306–308 and 316–317; these read RKT and HQ. Octanoyl-CoA contacts are provided by arginine 349 and threonine 351. Threonine 351 carries the phosphothreonine modification. FAD is bound at residue 374-378; the sequence is QILGG. Glutamate 401 lines the octanoyl-CoA pocket. Glutamate 401 acts as the Proton acceptor in catalysis. FAD is bound at residue 402–405; the sequence is GTSQ.

Belongs to the acyl-CoA dehydrogenase family. Homotetramer. Interacts with the heterodimeric electron transfer flavoprotein ETF. Requires FAD as cofactor. Post-translationally, acetylated. Could occur at proximity of the cofactor-binding sites and reduce the catalytic activity. Could be deacetylated by SIRT3.

It localises to the mitochondrion matrix. The catalysed reaction is a medium-chain 2,3-saturated fatty acyl-CoA + oxidized [electron-transfer flavoprotein] + H(+) = a medium-chain (2E)-enoyl-CoA + reduced [electron-transfer flavoprotein]. It carries out the reaction pentanoyl-CoA + oxidized [electron-transfer flavoprotein] + H(+) = (2E)-pentenoyl-CoA + reduced [electron-transfer flavoprotein]. It catalyses the reaction hexanoyl-CoA + oxidized [electron-transfer flavoprotein] + H(+) = (2E)-hexenoyl-CoA + reduced [electron-transfer flavoprotein]. The enzyme catalyses octanoyl-CoA + oxidized [electron-transfer flavoprotein] + H(+) = (2E)-octenoyl-CoA + reduced [electron-transfer flavoprotein]. The catalysed reaction is decanoyl-CoA + oxidized [electron-transfer flavoprotein] + H(+) = (2E)-decenoyl-CoA + reduced [electron-transfer flavoprotein]. It carries out the reaction dodecanoyl-CoA + oxidized [electron-transfer flavoprotein] + H(+) = (2E)-dodecenoyl-CoA + reduced [electron-transfer flavoprotein]. It catalyses the reaction tetradecanoyl-CoA + oxidized [electron-transfer flavoprotein] + H(+) = (2E)-tetradecenoyl-CoA + reduced [electron-transfer flavoprotein]. The enzyme catalyses oxidized [electron-transfer flavoprotein] + hexadecanoyl-CoA + H(+) = (2E)-hexadecenoyl-CoA + reduced [electron-transfer flavoprotein]. Its pathway is lipid metabolism; mitochondrial fatty acid beta-oxidation. Medium-chain specific acyl-CoA dehydrogenase is one of the acyl-CoA dehydrogenases that catalyze the first step of mitochondrial fatty acid beta-oxidation, an aerobic process breaking down fatty acids into acetyl-CoA and allowing the production of energy from fats. The first step of fatty acid beta-oxidation consists in the removal of one hydrogen from C-2 and C-3 of the straight-chain fatty acyl-CoA thioester, resulting in the formation of trans-2-enoyl-CoA. Electron transfer flavoprotein (ETF) is the electron acceptor that transfers electrons to the main mitochondrial respiratory chain via ETF-ubiquinone oxidoreductase (ETF dehydrogenase). Among the different mitochondrial acyl-CoA dehydrogenases, medium-chain specific acyl-CoA dehydrogenase acts specifically on acyl-CoAs with saturated 6 to 12 carbons long primary chains. This chain is Medium-chain specific acyl-CoA dehydrogenase, mitochondrial, found in Pan troglodytes (Chimpanzee).